Reading from the N-terminus, the 474-residue chain is tRNA-2-methylthio-N(6)-dimethylallyladenosine synthase (474 aa).

Positions 3 to 120 constitute an MTTase N-terminal domain; sequence KKLLIKTWGC…LPEMIKQSQS (118 aa). 6 residues coordinate [4Fe-4S] cluster: C12, C49, C83, C157, C161, and C164. A Radical SAM core domain is found at 143–375; the sequence is RAEGATAFVS…QQQINAQAMR (233 aa). The TRAM domain occupies 378-441; sequence RLMLGTEQRV…ANSLRGEIVR (64 aa).

This sequence belongs to the methylthiotransferase family. MiaB subfamily. In terms of assembly, monomer. The cofactor is [4Fe-4S] cluster.

It localises to the cytoplasm. The enzyme catalyses N(6)-dimethylallyladenosine(37) in tRNA + (sulfur carrier)-SH + AH2 + 2 S-adenosyl-L-methionine = 2-methylsulfanyl-N(6)-dimethylallyladenosine(37) in tRNA + (sulfur carrier)-H + 5'-deoxyadenosine + L-methionine + A + S-adenosyl-L-homocysteine + 2 H(+). In terms of biological role, catalyzes the methylthiolation of N6-(dimethylallyl)adenosine (i(6)A), leading to the formation of 2-methylthio-N6-(dimethylallyl)adenosine (ms(2)i(6)A) at position 37 in tRNAs that read codons beginning with uridine. This is tRNA-2-methylthio-N(6)-dimethylallyladenosine synthase from Vibrio vulnificus (strain CMCP6).